A 293-amino-acid polypeptide reads, in one-letter code: Glutamyl-Q tRNA(Asp) synthetase (293 aa).

L-glutamate-binding positions include 8 to 12 (RFAPT) and glutamate 44. The 'HIGH' region motif lies at 11-21 (PTPSGYLHFGS). Residues cysteine 100, cysteine 102, tyrosine 114, and cysteine 118 each coordinate Zn(2+). Residues tyrosine 171 and arginine 189 each contribute to the L-glutamate site. The short motif at 227-231 (KLGKS) is the 'KMSKS' region element. Position 230 (lysine 230) interacts with ATP.

The protein belongs to the class-I aminoacyl-tRNA synthetase family. GluQ subfamily. Zn(2+) is required as a cofactor.

Catalyzes the tRNA-independent activation of glutamate in presence of ATP and the subsequent transfer of glutamate onto a tRNA(Asp). Glutamate is transferred on the 2-amino-5-(4,5-dihydroxy-2-cyclopenten-1-yl) moiety of the queuosine in the wobble position of the QUC anticodon. The protein is Glutamyl-Q tRNA(Asp) synthetase of Pseudomonas aeruginosa (strain ATCC 15692 / DSM 22644 / CIP 104116 / JCM 14847 / LMG 12228 / 1C / PRS 101 / PAO1).